The chain runs to 258 residues: MTYLAKILDEKRHEVAELRKQRPQQRYEERKNDLSSCRDFAGNLKRTGENLRLIAEIKKASPSRGVIVHDFDPVDMARRYIGLGASAFSVLTDRLFFQGSIDYLETVKLQFHLPVIRKDFIIDERQIFESRLIGADAILLIVAALEASQLRDYLQLAAEIGLAVLVEVHDRQELDTAAEAGAGIIGVNNRNLKDFSVSLDTAIDLRPHFPEGVIAVAESGLKSADDIQRIGQASFDAVLIGEGLHVSPELHNVTWQKP.

This sequence belongs to the TrpC family.

The enzyme catalyses 1-(2-carboxyphenylamino)-1-deoxy-D-ribulose 5-phosphate + H(+) = (1S,2R)-1-C-(indol-3-yl)glycerol 3-phosphate + CO2 + H2O. It participates in amino-acid biosynthesis; L-tryptophan biosynthesis; L-tryptophan from chorismate: step 4/5. This is Indole-3-glycerol phosphate synthase from Chlorobium limicola (strain DSM 245 / NBRC 103803 / 6330).